A 470-amino-acid polypeptide reads, in one-letter code: Calmodulin-binding receptor-like cytoplasmic kinase 1 (470 aa).

2 disordered regions span residues methionine 1–aspartate 29 and proline 65–tryptophan 128. Positions proline 65 to serine 82 are enriched in basic and acidic residues. 2 stretches are compositionally biased toward polar residues: residues threonine 83–arginine 98 and tyrosine 108–aspartate 121. The Protein kinase domain occupies phenylalanine 147 to alanine 423. ATP is bound by residues isoleucine 153 to valine 161 and lysine 175. Positions phenylalanine 162–serine 185 are caM-binding. The active-site Proton acceptor is aspartate 273. Phosphoserine occurs at positions 277 and 308. The residue at position 309 (threonine 309) is a Phosphothreonine. A Phosphotyrosine modification is found at tyrosine 322.

This sequence belongs to the protein kinase superfamily. Ser/Thr protein kinase family. As to quaternary structure, interacts with calmodulin (CaM) in a Ca(2+)-dependent manner. It depends on Mg(2+) as a cofactor. Autophosphorylated.

The protein resides in the cytoplasm. The catalysed reaction is L-seryl-[protein] + ATP = O-phospho-L-seryl-[protein] + ADP + H(+). It catalyses the reaction L-threonyl-[protein] + ATP = O-phospho-L-threonyl-[protein] + ADP + H(+). With respect to regulation, up-regulated by Ca(2+)/CaM. In Arabidopsis thaliana (Mouse-ear cress), this protein is Calmodulin-binding receptor-like cytoplasmic kinase 1 (CRCK1).